The sequence spans 322 residues: Protein farnesyltransferase/geranylgeranyltransferase type-1 subunit alpha (322 aa).

The disordered stretch occupies residues 1-27 (MSSSEEDDGYVPFSKRPEWSDVKPLAQ). 6 PFTA repeats span residues 62 to 95 (RVLDLLEEVIQENPSNYTIWYYRREVLKAIEQDE), 103 to 136 (QEMNLLNDMGETDPKNYQIWNHRRFIVEKYIGSD), 138 to 171 (KEKEFLSGVLLEDAKNYHAWSHRQWLLKTYRDWN), 173 to 205 (ELAMVDKLLSLDHRNNSVWNHRFFVISNLNPSP), 213 to 246 (REVEFAFNHIRHSPNNESPWSYLKGLFKGQKIST), and 287 to 321 (NSLNICKLLSETIDPIHKNYWNFKYNTISDQLKLI).

The protein belongs to the protein prenyltransferase subunit alpha family. As to quaternary structure, heterodimer of fntA and fntB (farnesyltransferase). Heterodimer of an alpha and a beta subunit. Mg(2+) is required as a cofactor.

It catalyses the reaction L-cysteinyl-[protein] + (2E,6E)-farnesyl diphosphate = S-(2E,6E)-farnesyl-L-cysteinyl-[protein] + diphosphate. It carries out the reaction geranylgeranyl diphosphate + L-cysteinyl-[protein] = S-geranylgeranyl-L-cysteinyl-[protein] + diphosphate. Functionally, catalyzes the transfer of a farnesyl or geranyl-geranyl moiety from farnesyl or geranyl-geranyl diphosphate to a cysteine at the fourth position from the C-terminus of several proteins having the C-terminal sequence Cys-aliphatic-aliphatic-X. The alpha subunit is thought to participate in a stable complex with the substrate. The beta subunit binds the peptide substrate. In Dictyostelium discoideum (Social amoeba), this protein is Protein farnesyltransferase/geranylgeranyltransferase type-1 subunit alpha (fntA).